Reading from the N-terminus, the 257-residue chain is Global transcriptional regulator CodY (257 aa).

The interval 1-155 (MSLLSKTREL…AATVIGMEIL (155 aa)) is GAF domain. The H-T-H motif DNA-binding region spans 203–222 (ASKVADRVGITRSVIVNALR).

This sequence belongs to the CodY family.

Its subcellular location is the cytoplasm. In terms of biological role, DNA-binding global transcriptional regulator which is involved in the adaptive response to starvation and acts by directly or indirectly controlling the expression of numerous genes in response to nutrient availability. During rapid exponential growth, CodY is highly active and represses genes whose products allow adaptation to nutrient depletion. The sequence is that of Global transcriptional regulator CodY from Staphylococcus saprophyticus subsp. saprophyticus (strain ATCC 15305 / DSM 20229 / NCIMB 8711 / NCTC 7292 / S-41).